Reading from the N-terminus, the 216-residue chain is MOB kinase activator 3C (216 aa).

Zn(2+)-binding residues include Cys-82, Cys-87, His-164, and His-169.

This sequence belongs to the MOB1/phocein family.

Functionally, may regulate the activity of kinases. The protein is MOB kinase activator 3C (MOB3C) of Homo sapiens (Human).